Reading from the N-terminus, the 331-residue chain is Glycerol-3-phosphate dehydrogenase [NAD(P)+] (331 aa).

NADPH-binding residues include Ser-10, Trp-11, and Lys-101. Positions 101, 132, and 134 each coordinate sn-glycerol 3-phosphate. Ala-136 lines the NADPH pocket. Sn-glycerol 3-phosphate contacts are provided by Lys-188, Asp-241, Ser-251, Arg-252, and Asn-253. Lys-188 functions as the Proton acceptor in the catalytic mechanism. Arg-252 is an NADPH binding site. Val-276 and Glu-278 together coordinate NADPH.

Belongs to the NAD-dependent glycerol-3-phosphate dehydrogenase family.

Its subcellular location is the cytoplasm. It carries out the reaction sn-glycerol 3-phosphate + NAD(+) = dihydroxyacetone phosphate + NADH + H(+). The catalysed reaction is sn-glycerol 3-phosphate + NADP(+) = dihydroxyacetone phosphate + NADPH + H(+). Its pathway is membrane lipid metabolism; glycerophospholipid metabolism. Catalyzes the reduction of the glycolytic intermediate dihydroxyacetone phosphate (DHAP) to sn-glycerol 3-phosphate (G3P), the key precursor for phospholipid synthesis. The sequence is that of Glycerol-3-phosphate dehydrogenase [NAD(P)+] from Acholeplasma laidlawii (strain PG-8A).